A 90-amino-acid polypeptide reads, in one-letter code: Small ribosomal subunit protein bS16 (90 aa).

Belongs to the bacterial ribosomal protein bS16 family.

This is Small ribosomal subunit protein bS16 from Bacillus velezensis (strain DSM 23117 / BGSC 10A6 / LMG 26770 / FZB42) (Bacillus amyloliquefaciens subsp. plantarum).